The sequence spans 746 residues: NAD(P)H-quinone oxidoreductase subunit 5, chloroplastic (746 aa).

16 consecutive transmembrane segments (helical) span residues 9–29 (WIIP…LLLF), 39–59 (IWTF…LYLS), 89–109 (IDPL…LVLI), 125–145 (FAYM…SNLI), 147–167 (VYFF…FWFT), 185–205 (GDFG…SFEF), 221–241 (VNFF…IAKS), 258–278 (TPIS…FLVA), 280–300 (LLPL…IGII), 327–347 (LGYM…FHLI), 354–374 (ALLF…VGYS), 396–416 (TAFL…CFWS), 425–445 (LLFS…TAFY), 547–567 (ILFP…IGIP), 608–628 (FSVS…KPFY), and 723–743 (YLFF…FFYF).

The protein belongs to the complex I subunit 5 family. As to quaternary structure, NDH is composed of at least 16 different subunits, 5 of which are encoded in the nucleus.

Its subcellular location is the plastid. It localises to the chloroplast thylakoid membrane. It catalyses the reaction a plastoquinone + NADH + (n+1) H(+)(in) = a plastoquinol + NAD(+) + n H(+)(out). The catalysed reaction is a plastoquinone + NADPH + (n+1) H(+)(in) = a plastoquinol + NADP(+) + n H(+)(out). NDH shuttles electrons from NAD(P)H:plastoquinone, via FMN and iron-sulfur (Fe-S) centers, to quinones in the photosynthetic chain and possibly in a chloroplast respiratory chain. The immediate electron acceptor for the enzyme in this species is believed to be plastoquinone. Couples the redox reaction to proton translocation, and thus conserves the redox energy in a proton gradient. The chain is NAD(P)H-quinone oxidoreductase subunit 5, chloroplastic (ndhF) from Capsella bursa-pastoris (Shepherd's purse).